The primary structure comprises 323 residues: Zinc finger protein 784 (323 aa).

The segment at 1-26 is disordered; the sequence is MAAARPEAQSRSSPTPESRSQEPLDL. A compositionally biased stretch (polar residues) spans 9–18; sequence QSRSSPTPES. Serine 13 is modified (phosphoserine). 6 consecutive C2H2-type zinc fingers follow at residues 65–87, 101–123, 129–151, 196–218, 224–246, and 252–274; these read FHCA…EHGH, SRCH…YSLH, YRCA…QHRH, FACR…ERVH, YHCG…ARIH, and FRCT…QRTH. The interval 269 to 323 is disordered; sequence KHQRTHFHGPGPGLGDSGGQLGSSAAEGSGSGCGVGDPAEEGRGETAKVKVEADQ. A compositionally biased stretch (gly residues) spans 278–289; sequence PGPGLGDSGGQL. The span at 308–323 shows a compositional bias: basic and acidic residues; that stretch reads EEGRGETAKVKVEADQ. Lysine 318 participates in a covalent cross-link: Glycyl lysine isopeptide (Lys-Gly) (interchain with G-Cter in SUMO2).

The protein belongs to the krueppel C2H2-type zinc-finger protein family.

The protein localises to the nucleus. In terms of biological role, may be involved in transcriptional regulation. The polypeptide is Zinc finger protein 784 (ZNF784) (Homo sapiens (Human)).